A 107-amino-acid polypeptide reads, in one-letter code: Immunoglobulin kappa constant (107 aa).

The 98-residue stretch at 6–103 (PTVSIFPPSS…STSPIVKSFN (98 aa)) folds into the Ig-like domain. Cysteines 27 and 87 form a disulfide.

The protein is Immunoglobulin kappa constant of Mus musculus (Mouse).